Consider the following 736-residue polypeptide: Polyribonucleotide nucleotidyltransferase (736 aa).

Asp-488 and Asp-494 together coordinate Mg(2+). A KH domain is found at 555–614; sequence PMVQTLEIQKEKIRDVIGLGGKVIKELCKTFDVEIDISENGEVKVWGNVGENVKKAVQSI. In terms of domain architecture, S1 motif spans 624–692; sequence GDIFDGEVVK…HKNRVKLTLR (69 aa).

The protein belongs to the polyribonucleotide nucleotidyltransferase family. Requires Mg(2+) as cofactor.

It is found in the cytoplasm. The catalysed reaction is RNA(n+1) + phosphate = RNA(n) + a ribonucleoside 5'-diphosphate. Functionally, involved in mRNA degradation. Catalyzes the phosphorolysis of single-stranded polyribonucleotides processively in the 3'- to 5'-direction. The protein is Polyribonucleotide nucleotidyltransferase of Orientia tsutsugamushi (strain Ikeda) (Rickettsia tsutsugamushi).